A 434-amino-acid polypeptide reads, in one-letter code: MVFKNSIDLYKKAVELIPGGVNSPVRAFKSVNREAPIFIKKGQGAKIWDEDDNEYIDYICSWGPLILGHNHPKVIEEVKKIIENGSSYGLPTKYEVDLAELIVDIVPSIEKVRLTTSGTEATMSAVRLARAYTQRNKILKFEGCYHGHSDALLVKSGSGLLTEGYQDSNGITDGVLKDTLTLPFGDIEKVKEILKNKDVACVIVEPIPANMGLIETHKEFLQGLGKVTEKTGTILIFDEVISGFRLALGGAQEFFGITPDLTTLGKIIGGGYPVGAFGGKKEIMDLVAPVGRVYHAGTLSGNPIASKAGFATISYLKENPNIYKELEEKTNYLIDNIEILAKKYSVNVCVNSMGSLFTIFFVDIDKVENLEDSLKSNTENFSIYFNTMLENGIVIPPSQFEAHFLSMAHTKKELNRTLEVIEMAFKKIGEKSGK.

The residue at position 266 (Lys266) is an N6-(pyridoxal phosphate)lysine.

The protein belongs to the class-III pyridoxal-phosphate-dependent aminotransferase family. HemL subfamily. As to quaternary structure, homodimer. Requires pyridoxal 5'-phosphate as cofactor.

The protein resides in the cytoplasm. It carries out the reaction (S)-4-amino-5-oxopentanoate = 5-aminolevulinate. It participates in porphyrin-containing compound metabolism; protoporphyrin-IX biosynthesis; 5-aminolevulinate from L-glutamyl-tRNA(Glu): step 2/2. The protein is Glutamate-1-semialdehyde 2,1-aminomutase of Fusobacterium nucleatum subsp. nucleatum (strain ATCC 25586 / DSM 15643 / BCRC 10681 / CIP 101130 / JCM 8532 / KCTC 2640 / LMG 13131 / VPI 4355).